The following is a 377-amino-acid chain: Putative glutamate--cysteine ligase 2 (377 aa).

This sequence belongs to the glutamate--cysteine ligase type 2 family. YbdK subfamily.

The catalysed reaction is L-cysteine + L-glutamate + ATP = gamma-L-glutamyl-L-cysteine + ADP + phosphate + H(+). In terms of biological role, ATP-dependent carboxylate-amine ligase which exhibits weak glutamate--cysteine ligase activity. This is Putative glutamate--cysteine ligase 2 from Chromobacterium violaceum (strain ATCC 12472 / DSM 30191 / JCM 1249 / CCUG 213 / NBRC 12614 / NCIMB 9131 / NCTC 9757 / MK).